The chain runs to 157 residues: Crossover junction endodeoxyribonuclease RuvC (157 aa).

Catalysis depends on residues Asp7, Glu67, and Asp140. Mg(2+) is bound by residues Asp7, Glu67, and Asp140.

The protein belongs to the RuvC family. As to quaternary structure, homodimer which binds Holliday junction (HJ) DNA. The HJ becomes 2-fold symmetrical on binding to RuvC with unstacked arms; it has a different conformation from HJ DNA in complex with RuvA. In the full resolvosome a probable DNA-RuvA(4)-RuvB(12)-RuvC(2) complex forms which resolves the HJ. Mg(2+) is required as a cofactor.

The protein localises to the cytoplasm. It catalyses the reaction Endonucleolytic cleavage at a junction such as a reciprocal single-stranded crossover between two homologous DNA duplexes (Holliday junction).. Functionally, the RuvA-RuvB-RuvC complex processes Holliday junction (HJ) DNA during genetic recombination and DNA repair. Endonuclease that resolves HJ intermediates. Cleaves cruciform DNA by making single-stranded nicks across the HJ at symmetrical positions within the homologous arms, yielding a 5'-phosphate and a 3'-hydroxyl group; requires a central core of homology in the junction. The consensus cleavage sequence is 5'-(A/T)TT(C/G)-3'. Cleavage occurs on the 3'-side of the TT dinucleotide at the point of strand exchange. HJ branch migration catalyzed by RuvA-RuvB allows RuvC to scan DNA until it finds its consensus sequence, where it cleaves and resolves the cruciform DNA. This chain is Crossover junction endodeoxyribonuclease RuvC, found in Rickettsia bellii (strain RML369-C).